A 641-amino-acid polypeptide reads, in one-letter code: Phosphomethylpyrimidine synthase (641 aa).

Substrate contacts are provided by residues Asn221, Met250, Tyr279, His315, 335-337, 376-379, and Glu415; these read SRG and DGLR. His419 lines the Zn(2+) pocket. Substrate is bound at residue Tyr442. A Zn(2+)-binding site is contributed by His483. Positions 563, 566, and 571 each coordinate [4Fe-4S] cluster.

This sequence belongs to the ThiC family. As to quaternary structure, homodimer. [4Fe-4S] cluster is required as a cofactor.

It carries out the reaction 5-amino-1-(5-phospho-beta-D-ribosyl)imidazole + S-adenosyl-L-methionine = 4-amino-2-methyl-5-(phosphooxymethyl)pyrimidine + CO + 5'-deoxyadenosine + formate + L-methionine + 3 H(+). Its pathway is cofactor biosynthesis; thiamine diphosphate biosynthesis. Functionally, catalyzes the synthesis of the hydroxymethylpyrimidine phosphate (HMP-P) moiety of thiamine from aminoimidazole ribotide (AIR) in a radical S-adenosyl-L-methionine (SAM)-dependent reaction. This is Phosphomethylpyrimidine synthase from Rhodopseudomonas palustris (strain BisA53).